Reading from the N-terminus, the 658-residue chain is UvrABC system protein B (658 aa).

The Helicase ATP-binding domain maps to 25–178; that stretch reads KSLKNKNHYQ…KSFLLKLVEM (154 aa). 38 to 45 provides a ligand contact to ATP; that stretch reads GVTGSGKT. Residues 91 to 114 carry the Beta-hairpin motif; it reads HFDYYQPESYIPRRDLFIEKDSSI. A Helicase C-terminal domain is found at 433 to 607; sequence QVQDLFDEIK…ELKLRDDETK (175 aa). The region spanning 623–658 is the UVR domain; sequence EKIIKELDKKMRECAKNLDFEEAMHLRDEIAKLRTL.

This sequence belongs to the UvrB family. Forms a heterotetramer with UvrA during the search for lesions. Interacts with UvrC in an incision complex.

The protein localises to the cytoplasm. Functionally, the UvrABC repair system catalyzes the recognition and processing of DNA lesions. A damage recognition complex composed of 2 UvrA and 2 UvrB subunits scans DNA for abnormalities. Upon binding of the UvrA(2)B(2) complex to a putative damaged site, the DNA wraps around one UvrB monomer. DNA wrap is dependent on ATP binding by UvrB and probably causes local melting of the DNA helix, facilitating insertion of UvrB beta-hairpin between the DNA strands. Then UvrB probes one DNA strand for the presence of a lesion. If a lesion is found the UvrA subunits dissociate and the UvrB-DNA preincision complex is formed. This complex is subsequently bound by UvrC and the second UvrB is released. If no lesion is found, the DNA wraps around the other UvrB subunit that will check the other stand for damage. This chain is UvrABC system protein B, found in Helicobacter acinonychis (strain Sheeba).